We begin with the raw amino-acid sequence, 156 residues long: Large ribosomal subunit protein eL24 (156 aa).

Residues 87 to 156 (LELIKERRSQ…AFQKVHATSR (70 aa)) form a disordered region. Residues 89 to 129 (LIKERRSQKPSDRKAARDVKLAKDKEAKKADKAARKAEKAK) are compositionally biased toward basic and acidic residues. Residues 130 to 147 (SAAAGAQSKVSKQQSKGA) are compositionally biased toward low complexity.

The protein belongs to the eukaryotic ribosomal protein eL24 family.

This is Large ribosomal subunit protein eL24 (RPL24) from Debaryomyces hansenii (strain ATCC 36239 / CBS 767 / BCRC 21394 / JCM 1990 / NBRC 0083 / IGC 2968) (Yeast).